The sequence spans 418 residues: Tyrosine--tRNA ligase (418 aa).

Tyrosine 34 serves as a coordination point for L-tyrosine. The 'HIGH' region motif lies at 39-48; it reads PTADSLHLGH. L-tyrosine-binding residues include tyrosine 169 and glutamine 173. Positions 229 to 233 match the 'KMSKS' region motif; the sequence is KFGKS. Lysine 232 contacts ATP. An S4 RNA-binding domain is found at 352–418; it reads LNIVDMLVTA…GKKKYAVLTY (67 aa).

Belongs to the class-I aminoacyl-tRNA synthetase family. TyrS type 1 subfamily. As to quaternary structure, homodimer.

Its subcellular location is the cytoplasm. It carries out the reaction tRNA(Tyr) + L-tyrosine + ATP = L-tyrosyl-tRNA(Tyr) + AMP + diphosphate + H(+). Catalyzes the attachment of tyrosine to tRNA(Tyr) in a two-step reaction: tyrosine is first activated by ATP to form Tyr-AMP and then transferred to the acceptor end of tRNA(Tyr). The chain is Tyrosine--tRNA ligase from Streptococcus equi subsp. zooepidemicus (strain MGCS10565).